A 241-amino-acid chain; its full sequence is Sugar fermentation stimulation protein homolog (241 aa).

It belongs to the SfsA family.

In Jannaschia sp. (strain CCS1), this protein is Sugar fermentation stimulation protein homolog.